A 1101-amino-acid polypeptide reads, in one-letter code: Selenocysteine insertion sequence-binding protein 2-like (1101 aa).

5 disordered regions span residues 154 to 206, 240 to 295, 320 to 387, 884 to 1010, and 1030 to 1101; these read LGQV…AGPD, LWKS…PDSG, QKKP…SESL, TSDG…ISVE, and TLQL…TQTT. Residues 255 to 265 are compositionally biased toward low complexity; the sequence is AESSSEQGASE. Position 276 is a phosphoserine (Ser276). Polar residues predominate over residues 327 to 346; sequence KNQTFSRGGRQTEQRNNSQV. Composition is skewed to basic and acidic residues over residues 356-371 and 892-908; these read SSER…DNKH and ENEK…EKPS. Low complexity predominate over residues 925–939; it reads ATGSTTSATSAGKST. The segment covering 940–950 has biased composition (basic and acidic residues); it reads ASDKEEVKPDD. Polar residues predominate over residues 954-964; sequence ASQQSTETGSL. A compositionally biased stretch (acidic residues) spans 988–1002; it reads LEEEEDEDEEEEEDY. Polar residues predominate over residues 1030-1039; it reads TLQLGKTLNG. Residues 1040-1057 are compositionally biased toward acidic residues; it reads SEEDNVEQSGEEEAEAPE. The span at 1070–1087 shows a compositional bias: polar residues; sequence ADQQASPGQQKSSNCSSL.

In terms of biological role, binds SECIS (Sec insertion sequence) elements present on selenocysteine (Sec) protein mRNAs, but does not promote Sec incorporation into selenoproteins in vitro. The chain is Selenocysteine insertion sequence-binding protein 2-like (SECISBP2L) from Homo sapiens (Human).